Consider the following 834-residue polypeptide: U-box domain-containing protein 33 (834 aa).

The tract at residues 232-308 (FSTPESEHQH…SPSSFPDGVD (77 aa)) is disordered. Composition is skewed to polar residues over residues 243–273 (SRVQ…GSLN) and 284–293 (SEVTGSATVM). Residues 334–462 (LRRQKAEKNA…SHAETSTLQL (129 aa)) adopt a coiled-coil conformation. Positions 481 to 744 (FDSTLKIGEG…EVWRVLEPMR (264 aa)) constitute a Protein kinase domain. ATP contacts are provided by residues 487–495 (IGEGGYGSI) and Lys508. Catalysis depends on Asp603, which acts as the Proton acceptor. Residues 762–834 (IAPPYFICPI…AIQEWLQHHL (73 aa)) enclose the U-box domain.

This sequence belongs to the protein kinase superfamily. Ser/Thr protein kinase family.

The catalysed reaction is L-seryl-[protein] + ATP = O-phospho-L-seryl-[protein] + ADP + H(+). The enzyme catalyses L-threonyl-[protein] + ATP = O-phospho-L-threonyl-[protein] + ADP + H(+). It catalyses the reaction S-ubiquitinyl-[E2 ubiquitin-conjugating enzyme]-L-cysteine + [acceptor protein]-L-lysine = [E2 ubiquitin-conjugating enzyme]-L-cysteine + N(6)-ubiquitinyl-[acceptor protein]-L-lysine.. The protein operates within protein modification; protein ubiquitination. In terms of biological role, functions as an E3 ubiquitin ligase. The sequence is that of U-box domain-containing protein 33 (PUB33) from Arabidopsis thaliana (Mouse-ear cress).